The sequence spans 266 residues: Undecaprenyl-diphosphatase (266 aa).

A run of 8 helical transmembrane segments spans residues M1–G21, F43–I63, L81–I101, V109–V129, L159–G179, P183–L203, Y219–M239, and S246–Y266.

Belongs to the UppP family.

It is found in the cell inner membrane. The catalysed reaction is di-trans,octa-cis-undecaprenyl diphosphate + H2O = di-trans,octa-cis-undecaprenyl phosphate + phosphate + H(+). Functionally, catalyzes the dephosphorylation of undecaprenyl diphosphate (UPP). Confers resistance to bacitracin. The sequence is that of Undecaprenyl-diphosphatase from Fusobacterium nucleatum subsp. nucleatum (strain ATCC 25586 / DSM 15643 / BCRC 10681 / CIP 101130 / JCM 8532 / KCTC 2640 / LMG 13131 / VPI 4355).